The primary structure comprises 228 residues: General odorant-binding protein 71 (228 aa).

Positions 1-20 (MCGAIVLLLLVGTSPAPVEG) are cleaved as a signal peptide. The tract at residues 50–131 (TMGEWGQRDR…GNSSSSSSST (82 aa)) is disordered. Residues 55-72 (GQRDRNGEEQQMMRDYGR) show a composition bias toward basic and acidic residues. Low complexity predominate over residues 83–99 (GGQTSGSSSSGSAGEHS). The span at 111 to 120 (AGQGGNGTRS) shows a compositional bias: gly residues. A compositionally biased stretch (low complexity) spans 121–131 (GGNSSSSSSST). Cystine bridges form between cysteine 138-cysteine 199 and cysteine 185-cysteine 208.

This sequence belongs to the PBP/GOBP family.

It is found in the secreted. Functionally, present in the aqueous fluid surrounding olfactory sensory dendrites and are thought to aid in the capture and transport of hydrophobic odorants into and through this fluid. The chain is General odorant-binding protein 71 (Obp71) from Anopheles gambiae (African malaria mosquito).